We begin with the raw amino-acid sequence, 1700 residues long: Rho guanine nucleotide exchange factor 28 (1700 aa).

The interval 288–335 (TERATMPSGAAETEEEVRNLESGRSPSEEEEDGQLVKSQADGPSEQED) is disordered. Phosphoserine is present on residues S312, S314, and S478. The tract at residues 483-525 (VADSEEEGRSEPPICYAVGSQSSPRTGLPGGDELDSFDANTEP) is disordered. The residue at position 623 (S623) is a Phosphoserine. Residues 651–698 (RHQFVPGTFSGVLQCSGCDKTLLGKESLQCANCKANTHKGCKDTVPPC) form a Phorbol-ester/DAG-type zinc finger. Over residues 709–720 (NKPQTILGSSSV) the composition is skewed to polar residues. 2 disordered regions span residues 709–761 (NKPQ…VPGT) and 774–799 (ESEG…GSSP). The segment covering 728–737 (LSLHPSPSMP) has biased composition (low complexity). Polar residues predominate over residues 774 to 783 (ESEGDSNSWR). Residues 848 to 1043 (KRQDVIFELM…KDMIAAVDLK (196 aa)) form the DH domain. The region spanning 1085-1187 (ALLHDGLVYW…WMRRIQQAVE (103 aa)) is the PH domain. The interval 1186 to 1207 (VESCPEEEGGRTSESDEERRKA) is disordered. Positions 1193 to 1207 (EGGRTSESDEERRKA) are enriched in basic and acidic residues. Positions 1294 to 1303 (DVSQPSEEGP) are interaction with PTK2/FAK1; required for regulation of axonal branching and synapse formation. The interval 1369-1380 (IIQAIQNLTRLL) is mediates cytoplasmic retention and interaction with YWHAH. The interval 1421 to 1700 (QEKSRYLEKH…DGAEENIVYL (280 aa)) is interaction with microtubules. Residues 1473 to 1522 (ERECQSQEELLLRHRSELDHQLQEYQQNLERLREGQRMVERERQRMRDQQ) adopt a coiled-coil conformation. The segment at 1493–1524 (QLQEYQQNLERLREGQRMVERERQRMRDQQGL) is RNA-binding. A Phosphoserine modification is found at S1535. The mediates cytoplasmic retention and interaction with MAPK8IP1 stretch occupies residues 1563–1576 (FLNDAFTHMSLNTS). Positions 1574–1598 (NTSNKPNPSGAPWDAHPPGGSHLDL) are disordered. At S1604 the chain carries Phosphoserine. Residues 1612-1700 (VSQPSDVNSE…DGAEENIVYL (89 aa)) are disordered. The segment covering 1613–1623 (SQPSDVNSELW) has biased composition (polar residues). The segment covering 1633 to 1642 (ARQESIKDSC) has biased composition (basic and acidic residues). Residues 1647–1672 (DLNSFQTESPDPQDSNQRGPQPQTLI) are compositionally biased toward polar residues.

Homooligomer; forms cytoplasmic aggregates. Forms a complex with MAPK8 and MAPK8IP1. Interacts with RHOA. Interacts with microtubules. Interacts with YWHAE and YWHAH. Interacts with PTK2/FAK1. Interacts with NEFL. Interacts with CTNND2; prevents interaction with RHOA. Phosphorylated on tyrosine upon stimulation of cells by laminin.

The protein resides in the cytoplasm. It is found in the cell membrane. Functionally, functions as a RHOA-specific guanine nucleotide exchange factor regulating signaling pathways downstream of integrins and growth factor receptors. Functions in axonal branching, synapse formation and dendritic morphogenesis. Also functions in focal adhesion formation, cell motility and B-lymphocytes activation. May regulate NEFL expression and aggregation and play a role in apoptosis. This is Rho guanine nucleotide exchange factor 28 (Arhgef28) from Rattus norvegicus (Rat).